Reading from the N-terminus, the 474-residue chain is Nitrogenase vanadium-iron protein alpha chain (474 aa).

[8Fe-7S] cluster is bound by residues Cys49, Cys75, and Cys138. Residues Cys257 and His423 each coordinate [7Fe-V-9S-C-homocitryl] cluster.

The protein belongs to the NifD/NifK/NifE/NifN family. As to quaternary structure, hexamer of two alpha, two beta, and two delta chains. The cofactor is [8Fe-7S] cluster. [7Fe-V-9S-C-homocitryl] cluster is required as a cofactor.

The enzyme catalyses N2 + 8 reduced [2Fe-2S]-[ferredoxin] + 16 ATP + 16 H2O = H2 + 8 oxidized [2Fe-2S]-[ferredoxin] + 2 NH4(+) + 16 ADP + 16 phosphate + 6 H(+). Its function is as follows. This vanadium-iron protein is part of the nitrogenase complex that catalyzes the key enzymatic reactions in nitrogen fixation. The sequence is that of Nitrogenase vanadium-iron protein alpha chain (vnfD) from Azotobacter vinelandii.